The sequence spans 145 residues: Leptin (145 aa).

The first 12 residues, 1–12 (LWLWPYLFFIEA), serve as a signal peptide directing secretion.

The protein belongs to the leptin family.

It is found in the secreted. Functionally, key player in the regulation of energy balance and body weight control. Once released into the circulation, has central and peripheral effects by binding LEPR, found in many tissues, which results in the activation of several major signaling pathways. In the hypothalamus, acts as an appetite-regulating factor that induces a decrease in food intake and an increase in energy consumption by inducing anorexinogenic factors and suppressing orexigenic neuropeptides, also regulates bone mass and secretion of hypothalamo-pituitary-adrenal hormones. In the periphery, increases basal metabolism, influences reproductive function, regulates pancreatic beta-cell function and insulin secretion, is pro-angiogenic for endothelial cell and affects innate and adaptive immunity. In the arcuate nucleus of the hypothalamus, activates by depolarization POMC neurons inducing FOS and SOCS3 expression to release anorexigenic peptides and inhibits by hyperpolarization NPY neurons inducing SOCS3 with a consequent reduction on release of orexigenic peptides. In addition to its known satiety inducing effect, has a modulatory role in nutrient absorption. In the intestine, reduces glucose absorption by enterocytes by activating PKC and leading to a sequential activation of p38, PI3K and ERK signaling pathways which exerts an inhibitory effect on glucose absorption. Acts as a growth factor on certain tissues, through the activation of different signaling pathways increases expression of genes involved in cell cycle regulation such as CCND1, via JAK2-STAT3 pathway, or VEGFA, via MAPK1/3 and PI3K-AKT1 pathways. May also play an apoptotic role via JAK2-STAT3 pathway and up-regulation of BIRC5 expression. Pro-angiogenic, has mitogenic activity on vascular endothelial cells and plays a role in matrix remodeling by regulating the expression of matrix metalloproteinases (MMPs) and tissue inhibitors of metalloproteinases (TIMPs). In innate immunity, modulates the activity and function of neutrophils by increasing chemotaxis and the secretion of oxygen radicals. Increases phagocytosis by macrophages and enhances secretion of pro-inflammatory mediators. Increases cytotoxic ability of NK cells. Plays a pro-inflammatory role, in synergy with IL1B, by inducing NOS2 which promotes the production of IL6, IL8 and Prostaglandin E2, through a signaling pathway that involves JAK2, PI3K, MAP2K1/MEK1 and MAPK14/p38. In adaptive immunity, promotes the switch of memory T-cells towards T helper-1 cell immune responses. Increases CD4(+)CD25(-) T-cell proliferation and reduces autophagy during TCR (T-cell receptor) stimulation, through MTOR signaling pathway activation and BCL2 up-regulation. This is Leptin (LEP) from Equus caballus (Horse).